A 325-amino-acid chain; its full sequence is Ribonuclease Z (325 aa).

The Zn(2+) site is built by His-63, His-65, Asp-67, His-68, His-147, Asp-218, and His-276. Residue Asp-67 is the Proton acceptor of the active site.

The protein belongs to the RNase Z family. As to quaternary structure, homodimer. Requires Zn(2+) as cofactor.

The enzyme catalyses Endonucleolytic cleavage of RNA, removing extra 3' nucleotides from tRNA precursor, generating 3' termini of tRNAs. A 3'-hydroxy group is left at the tRNA terminus and a 5'-phosphoryl group is left at the trailer molecule.. In terms of biological role, zinc phosphodiesterase, which displays some tRNA 3'-processing endonuclease activity. Probably involved in tRNA maturation, by removing a 3'-trailer from precursor tRNA. The protein is Ribonuclease Z of Oenococcus oeni (strain ATCC BAA-331 / PSU-1).